The primary structure comprises 313 residues: Expansin-like A4 (313 aa).

Positions 1 to 30 are cleaved as a signal peptide; it reads MDDNGDVHFCHRATAVVALLLLHLVVVANA. One can recognise an Expansin-like EG45 domain in the interval 59–173; it reads GGACGFGAAP…RRIPCEYRES (115 aa). N-linked (GlcNAc...) asparagine glycosylation is present at asparagine 124. The 94-residue stretch at 188–281 folds into the Expansin-like CBD domain; the sequence is THLAIRFLYQ…DWRPGEVYDT (94 aa).

This sequence belongs to the expansin family. Expansin-like A subfamily.

It localises to the secreted. The chain is Expansin-like A4 (EXLA4) from Oryza sativa subsp. japonica (Rice).